The sequence spans 359 residues: MSSMYHDYDHLTASGKGLWSKFYGLVDAAVLLYDEIQRRGKIVSEEESQKRIFCLFPRRKRSSLVKRQQKLNGGFISFTSSSLIDLNQLPTDSEIEDPQTSDSQMKTLQNSSSEPCTSLVLFDYKTAESEKMEAKTLQNPSSELCSSLVLSDYKMAESEKMETKDPPNPLSLCLTGNTSRKRRAVEERKRTGGFKKAKVAPFPGTARDTPKWLVKVMRDMKEAKDAKLIFEKTLFVTDINPTQNRLSMPFNNLLQNDFLTSVESRIIKEDINNNKKIGVGAILVDQRSVKWGVMLKRWELKKESGKGSWNYNLICGWNDVVEANGLKEGDNISVWSFRCRGVLCFAMEQSSSSLALCLC.

Disordered stretches follow at residues 92–111 (DSEI…LQNS) and 159–192 (EKME…KRTG). The segment covering 100–111 (TSDSQMKTLQNS) has biased composition (polar residues). Positions 250 to 351 (FNNLLQNDFL…VLCFAMEQSS (102 aa)) form a DNA-binding region, TF-B3.

The protein resides in the nucleus. This is Putative B3 domain-containing protein At3g24850 from Arabidopsis thaliana (Mouse-ear cress).